The following is a 217-amino-acid chain: Probable GTP-binding protein EngB (217 aa).

In terms of domain architecture, EngB-type G spans 27 to 201 (TGIEVAFAGR…RDKLDTWFSE (175 aa)). Residues 35-42 (GRSNAGKS), 62-66 (GRTQL), 80-83 (DLPG), 147-150 (TKAD), and 180-182 (FSS) each bind GTP. Serine 42 and threonine 64 together coordinate Mg(2+).

Belongs to the TRAFAC class TrmE-Era-EngA-EngB-Septin-like GTPase superfamily. EngB GTPase family. Mg(2+) serves as cofactor.

In terms of biological role, necessary for normal cell division and for the maintenance of normal septation. This chain is Probable GTP-binding protein EngB, found in Edwardsiella ictaluri (strain 93-146).